Consider the following 159-residue polypeptide: Endoribonuclease YbeY (159 aa).

Zn(2+) is bound by residues His114, His118, and His124.

It belongs to the endoribonuclease YbeY family. Zn(2+) is required as a cofactor.

It localises to the cytoplasm. In terms of biological role, single strand-specific metallo-endoribonuclease involved in late-stage 70S ribosome quality control and in maturation of the 3' terminus of the 16S rRNA. In Pectobacterium carotovorum subsp. carotovorum (strain PC1), this protein is Endoribonuclease YbeY.